We begin with the raw amino-acid sequence, 384 residues long: Carbamoyl phosphate synthase small chain (384 aa).

A CPSase region spans residues 1–192 (MIKKIPAILV…LADRNREKIY (192 aa)). The L-glutamine site is built by Ser-51, Gly-244, and Gly-246. The Glutamine amidotransferase type-1 domain occupies 196 to 382 (KVIVIDFGVK…IEIMKQFRKE (187 aa)). Residue Cys-272 is the Nucleophile of the active site. The L-glutamine site is built by Met-273, Gln-276, Asn-312, Gly-314, and Phe-315. Active-site residues include His-355 and Glu-357.

This sequence belongs to the CarA family. In terms of assembly, composed of two chains; the small (or glutamine) chain promotes the hydrolysis of glutamine to ammonia, which is used by the large (or ammonia) chain to synthesize carbamoyl phosphate. Tetramer of heterodimers (alpha,beta)4.

It is found in the plastid. It localises to the chloroplast. It carries out the reaction hydrogencarbonate + L-glutamine + 2 ATP + H2O = carbamoyl phosphate + L-glutamate + 2 ADP + phosphate + 2 H(+). The catalysed reaction is L-glutamine + H2O = L-glutamate + NH4(+). The protein operates within amino-acid biosynthesis; L-arginine biosynthesis; carbamoyl phosphate from bicarbonate: step 1/1. It functions in the pathway pyrimidine metabolism; UMP biosynthesis via de novo pathway; (S)-dihydroorotate from bicarbonate: step 1/3. Its function is as follows. Small subunit of the glutamine-dependent carbamoyl phosphate synthetase (CPSase). CPSase catalyzes the formation of carbamoyl phosphate from the ammonia moiety of glutamine, carbonate, and phosphate donated by ATP, constituting the first step of 2 biosynthetic pathways, one leading to arginine and/or urea and the other to pyrimidine nucleotides. The small subunit (glutamine amidotransferase) binds and cleaves glutamine to supply the large subunit with the substrate ammonia. The sequence is that of Carbamoyl phosphate synthase small chain from Porphyra purpurea (Red seaweed).